A 311-amino-acid chain; its full sequence is L-lactate dehydrogenase 2 (311 aa).

NAD(+) contacts are provided by Val-14, Asp-35, and Arg-40. A substrate-binding site is contributed by Arg-90. NAD(+)-binding positions include Ser-103, 120 to 122 (ATN), and Thr-145. 122 to 125 (NPCD) is a substrate binding site. A substrate-binding site is contributed by 150–153 (DTTR). His-177 acts as the Proton acceptor in catalysis. Position 230 (Thr-230) interacts with substrate.

It belongs to the LDH/MDH superfamily. LDH family. As to quaternary structure, homotetramer.

The protein resides in the cytoplasm. It catalyses the reaction (S)-lactate + NAD(+) = pyruvate + NADH + H(+). The protein operates within fermentation; pyruvate fermentation to lactate; (S)-lactate from pyruvate: step 1/1. In terms of biological role, catalyzes the conversion of lactate to pyruvate. The protein is L-lactate dehydrogenase 2 of Listeria monocytogenes serotype 4b (strain F2365).